A 590-amino-acid chain; its full sequence is Multidrug resistance ABC transporter ATP-binding and permease protein (590 aa).

6 consecutive transmembrane segments (helical) span residues 35-55, 79-99, 150-170, 176-196, 261-281, and 292-312; these read YLFFVIGIVAGIIGTLIQLQV, IALYIGSAAVSAIAAIVLGIF, IPQAFTSILLLVGSIIFMLQM, LAMIIAVPIVMLIMFPIMTFG, VMMLSMMLMIFGLLAYGIYLI, and LGMMMYLMNLIGVVPTVATFF. Residues 38–317 enclose the ABC transmembrane type-1 domain; it reads FVIGIVAGII…VATFFTELAK (280 aa). The ABC transporter domain maps to 349-584; that stretch reads LSAHHVDFAY…HPLYAKYVSE (236 aa). 382–389 contributes to the ATP binding site; it reads GPSGGGKS.

It belongs to the ABC transporter superfamily. Multidrug exporter LmrA (TC 3.A.1.117.1) family. Homodimer.

It is found in the cell membrane. The catalysed reaction is ATP + H2O + xenobioticSide 1 = ADP + phosphate + xenobioticSide 2.. Functionally, efflux transporter for a variety of amphiphilic cationic compounds, including antibiotics. The sequence is that of Multidrug resistance ABC transporter ATP-binding and permease protein (lmrA) from Lactococcus lactis subsp. cremoris (strain MG1363).